A 32-amino-acid chain; its full sequence is Tail virion protein G7P (32 aa).

A helical transmembrane segment spans residues 9–29; it reads LYQLIFNAGLVICFGLGVISG.

Belongs to the inovirus G7P protein family.

It is found in the virion. The protein localises to the host membrane. In terms of biological role, may initiate with G9P the virion concomitant assembly-budding process, by interacting with the packaging signal of the viral genome. The assembly-budding takes place at the host inner membrane. In turn, G7P and G9P are present at the end of the filamentous virion that emerges first from the bacterial host. In Escherichia phage If1 (Bacteriophage If1), this protein is Tail virion protein G7P (VII).